The sequence spans 761 residues: Semaphorin-3D (761 aa).

A signal peptide spans Met-1–Gly-24. Residues Arg-32–Leu-519 form the Sema domain. Cys-105 and Cys-116 are joined by a disulfide. The N-linked (GlcNAc...) asparagine glycan is linked to Asn-127. 4 cysteine pairs are disulfide-bonded: Cys-134–Cys-143, Cys-274–Cys-386, Cys-298–Cys-346, and Cys-522–Cys-540. Residues Pro-552–Asn-670 enclose the Ig-like C2-type domain. Asn-595 carries N-linked (GlcNAc...) asparagine glycosylation. A disulfide bond links Cys-653 and Cys-719. Basic residues predominate over residues Arg-728–Glu-754. The interval Arg-728–Thr-761 is disordered.

This sequence belongs to the semaphorin family. As to expression, developing spinal cord and developing visual system. Collapsin-1, -2, -3, and -5 bind to overlapping but distinct axon tracts.

The protein resides in the secreted. Functionally, induces the collapse and paralysis of neuronal growth cones. Could potentially act as repulsive cues toward specific neuronal populations. Binds to neuropilin. The protein is Semaphorin-3D (SEMA3D) of Gallus gallus (Chicken).